An 852-amino-acid chain; its full sequence is Disrupted in schizophrenia 1 homolog (852 aa).

3 disordered regions span residues M1 to P86, E236 to L264, and Q280 to G320. The interval M1–V294 is interaction with MAP1A. Polar residues predominate over residues A65 to A79. Residues S253 to H263 show a composition bias toward basic and acidic residues. Low complexity predominate over residues Q288–A311. The tract at residues S295–E693 is interaction with TRAF3IP1. Coiled coils occupy residues E367–S397 and I449–W496. The required for localization to punctate cytoplasmic foci stretch occupies residues L437–S594. The segment at D443–A852 is necessary and sufficient for interaction with PCNT and localization at the centrosome. Positions G595–A852 are interaction with ATF4 and ATF5. Disordered regions lie at residues E706–L746 and K833–A852. The segment at T728–A852 is interaction with NDEL1 and PAFAH1B1. The segment at T728 to A852 is interaction with PAFAH1B1. Residues S802–A835 form an interaction with NDEL1 region.

Interacts with NDEL1. Interacts with CCDC88A (via C-terminus); the interaction is direct. Interacts with GSK3B. Interacts with tubulin alpha, ACTN2, ANKHD1, ATF4, ATF5, CEP63, EIF3S3, MAP1A, NDEL1, PAFAH1B1, RANBP9, SPTBN4, SYNE1 and TRAF3IP1. Interaction with microtubules may be mediated in part by TRAF3IP1. Interacts (via C-terminal) with PCNT. Interacts with CHCHD6. Interacts with CCDC141. Interacts with FBXW7, the substrate-recognition component of a SCF (SKP1-CUL1-F-box protein) E3 ubiquitin-protein ligase complex; the interaction targets DISC1 for proteasomal degradation. Interacts with ZNF365. Interacts with ATF4; inhibiting ATF4 transcription factor activity by disrupting ATF4 dimerization and DNA-binding. Interacts with PDE4B. In terms of processing, ubiquitinated. Ubiquitination with 'Lys-48'-linked polyubiquitin chains leads to its proteasomal degradation. As to expression, expressed in granule cell precursors within the dentate migratory stream during the first week of postnatal life and in differentiated granule cells of the hippocampus (at protein level). Detected in heart, brain, kidney, and testis. Expressed in dentate gyrus, hippocampus and in the olfactory bulb.

The protein resides in the cytoplasm. It is found in the cytoskeleton. It localises to the mitochondrion. Its subcellular location is the microtubule organizing center. The protein localises to the centrosome. The protein resides in the postsynaptic density. In terms of biological role, involved in the regulation of multiple aspects of embryonic and adult neurogenesis. Required for neural progenitor proliferation in the ventrical/subventrical zone during embryonic brain development and in the adult dentate gyrus of the hippocampus. Participates in the Wnt-mediated neural progenitor proliferation as a positive regulator by modulating GSK3B activity and CTNNB1 abundance. Plays a role as a modulator of the AKT-mTOR signaling pathway controlling the tempo of the process of newborn neurons integration during adult neurogenesis, including neuron positioning, dendritic development and synapse formation. Inhibits the activation of AKT-mTOR signaling upon interaction with CCDC88A. Regulates the migration of early-born granule cell precursors toward the dentate gyrus during the hippocampal development. Inhibits ATF4 transcription factor activity in neurons by disrupting ATF4 dimerization and DNA-binding. Plays a role, together with PCNT, in the microtubule network formation. This is Disrupted in schizophrenia 1 homolog from Mus musculus (Mouse).